The primary structure comprises 165 residues: Anaphase-promoting complex subunit 11 (165 aa).

Residues 52 to 95 form an RING-type; atypical zinc finger; the sequence is CPSCKFPGDQCPLVIGLCHHNFHDHCIYRWLDTPTSKGLCPMCR.

In terms of assembly, the APC/C is composed of at least 13 subunits that stay tightly associated throughout the cell cycle: APC1, APC2, APC4, APC5, APC9, APC11, CDC16, CDC23, CDC26, CDC27, DOC1, MND2 and SWM1.

It functions in the pathway protein modification; protein ubiquitination. In terms of biological role, probably catalytic subunit of the anaphase promoting complex/cyclosome (APC/C), a cell cycle-regulated E3 ubiquitin-protein ligase complex that controls progression through mitosis and the G1 phase of the cell cycle. The APC/C is thought to confer substrate specificity and, in the presence of ubiquitin-conjugating E2 enzymes, it catalyzes the formation of protein-ubiquitin conjugates that are subsequently degraded by the 26S proteasome. In early mitosis, the APC/C is activated by CDC20 and targets securin PDS1, the B-type cyclin CLB5, and other anaphase inhibitory proteins for proteolysis, thereby triggering the separation of sister chromatids at the metaphase-to-anaphase transition. In late mitosis and in G1, degradation of CLB5 allows activation of the APC/C by CDH1, which is needed to destroy CDC20 and the B-type cyclin CLB2 to allow exit from mitosis and creating the low CDK state necessary for cytokinesis and for reforming prereplicative complexes in G1 prior to another round of replication. APC11 is required to recruit the ubiquitin-conjugating enzyme E2 to the APC/C. This Saccharomyces cerevisiae (strain ATCC 204508 / S288c) (Baker's yeast) protein is Anaphase-promoting complex subunit 11 (APC11).